Consider the following 550-residue polypeptide: DNA gyrase subunit A (550 aa).

The Topo IIA-type catalytic domain maps to 1–550 (FRPDRSHAKS…GMATNIPPHN (550 aa)). Tyr66 functions as the O-(5'-phospho-DNA)-tyrosine intermediate in the catalytic mechanism. The DOD-type homing endonuclease domain occupies 192 to 332 (LLGAFISEGF…VQQMLLEFGV (141 aa)).

It belongs to the type II topoisomerase GyrA/ParC subunit family. As to quaternary structure, heterotetramer, composed of two GyrA and two GyrB chains. In the heterotetramer, GyrA contains the active site tyrosine that forms a transient covalent intermediate with DNA, while GyrB binds cofactors and catalyzes ATP hydrolysis. In terms of processing, this protein undergoes a protein self splicing that involves a post-translational excision of the intervening region (intein) followed by peptide ligation.

It localises to the cytoplasm. It catalyses the reaction ATP-dependent breakage, passage and rejoining of double-stranded DNA.. In terms of biological role, a type II topoisomerase that negatively supercoils closed circular double-stranded (ds) DNA in an ATP-dependent manner to modulate DNA topology and maintain chromosomes in an underwound state. Negative supercoiling favors strand separation, and DNA replication, transcription, recombination and repair, all of which involve strand separation. Also able to catalyze the interconversion of other topological isomers of dsDNA rings, including catenanes and knotted rings. Type II topoisomerases break and join 2 DNA strands simultaneously in an ATP-dependent manner. The polypeptide is DNA gyrase subunit A (gyrA) (Mycobacterium gordonae).